Here is a 397-residue protein sequence, read N- to C-terminus: Elongation factor Tu (397 aa).

In terms of domain architecture, tr-type G spans 10–207 (KPHVNIGTIG…AVDESIPEPV (198 aa)). Residues 19–26 (GHVDHGKT) form a G1 region. Residue 19–26 (GHVDHGKT) coordinates GTP. Position 26 (Thr26) interacts with Mg(2+). The segment at 63–67 (GITIN) is G2. Positions 84-87 (DAPG) are G3. GTP-binding positions include 84–88 (DAPGH) and 139–142 (NKSD). The tract at residues 139–142 (NKSD) is G4. The segment at 177 to 179 (SGL) is G5.

Belongs to the TRAFAC class translation factor GTPase superfamily. Classic translation factor GTPase family. EF-Tu/EF-1A subfamily. As to quaternary structure, monomer.

The protein localises to the cytoplasm. The catalysed reaction is GTP + H2O = GDP + phosphate + H(+). In terms of biological role, GTP hydrolase that promotes the GTP-dependent binding of aminoacyl-tRNA to the A-site of ribosomes during protein biosynthesis. In Clavibacter michiganensis subsp. michiganensis (strain NCPPB 382), this protein is Elongation factor Tu.